The primary structure comprises 76 residues: KANTR integral membrane protein (76 aa).

The signal sequence occupies residues 1 to 25; that stretch reads MSPFSLLILVICAFSLFFLINLTRG. The Extracellular segment spans residues 26-34; that stretch reads LSILLVFSK. The chain crosses the membrane as a helical span at residues 35 to 55; the sequence is NQLLALLLLSIVSLFSISLIS. At 56-76 the chain is on the cytoplasmic side; that stretch reads ALIFFDLLPSTFFGFILLFFF.

The protein resides in the membrane. In Homo sapiens (Human), this protein is KANTR integral membrane protein.